Consider the following 232-residue polypeptide: uncharacterized protein (232 aa).

It localises to the cytoplasm. Its subcellular location is the nucleus. This is an uncharacterized protein from Saccharomyces cerevisiae (strain ATCC 204508 / S288c) (Baker's yeast).